The sequence spans 810 residues: Calpain-3 (810 aa).

Residues Val9–Glu27 show a composition bias toward low complexity. Residues Val9–Gly31 are disordered. In terms of domain architecture, Calpain catalytic spans Leu68–Thr410. Catalysis depends on residues Cys123, His327, and Asn351. The tract at residues Pro411–Asn579 is domain III. The disordered stretch occupies residues Glu578–Glu639. The segment at Met580–Glu638 is linker. The span at Asp613–Glu639 shows a compositional bias: basic and acidic residues. EF-hand domains lie at Glu638 to Lys672, Phe681 to Lys714, Asp711 to Arg746, and Val776 to Ala810. Positions Glu639–Tyr809 are domain IV. Ca(2+)-binding residues include Ala651, Asp654, Glu656, Glu661, Asp694, Asp696, Ser698, Lys700, Glu705, Asp724, Asp726, Ser728, Thr730, Glu735, Asp789, Asp791, Asp793, and Ile795.

This sequence belongs to the peptidase C2 family. As to quaternary structure, homodimer; via EF-hand domain 4. Interacts with TTN/titin. Interacts with CMYA5; this interaction, which results in CMYA5 proteolysis, may protect CAPN3 from autolysis. Interacts with SIMC1. Interacts with UTP25; the interaction is required for CAPN3 translocation to the nucleolus. Skeletal muscle. Low levels in spleen, intestine and bone.

The protein localises to the cytoplasm. Its subcellular location is the nucleus. It is found in the nucleolus. It carries out the reaction Broad endopeptidase activity.. With respect to regulation, activated by micromolar concentrations of calcium and inhibited by calpastatin. Its function is as follows. Calcium-regulated non-lysosomal thiol-protease. Proteolytically cleaves CTBP1. Mediates, with UTP25, the proteasome-independent degradation of p53/TP53. The sequence is that of Calpain-3 (CAPN3) from Gallus gallus (Chicken).